A 411-amino-acid chain; its full sequence is Argininosuccinate synthase (411 aa).

ATP-binding positions include 15-23 (AYSGGLDTS) and alanine 42. Residues tyrosine 93 and serine 98 each contribute to the L-citrulline site. Residue glycine 123 coordinates ATP. The L-aspartate site is built by threonine 125, asparagine 129, and aspartate 130. Residue asparagine 129 participates in L-citrulline binding. L-citrulline contacts are provided by arginine 133, serine 185, serine 194, glutamate 270, and tyrosine 282.

The protein belongs to the argininosuccinate synthase family. Type 1 subfamily. Homotetramer.

It is found in the cytoplasm. The catalysed reaction is L-citrulline + L-aspartate + ATP = 2-(N(omega)-L-arginino)succinate + AMP + diphosphate + H(+). It participates in amino-acid biosynthesis; L-arginine biosynthesis; L-arginine from L-ornithine and carbamoyl phosphate: step 2/3. The polypeptide is Argininosuccinate synthase (Psychrobacter sp. (strain PRwf-1)).